Reading from the N-terminus, the 330-residue chain is MAILAFQKPENVLMMETSDSIAKFEFKPLEPGYGITIGNALRRILLSSLEGFAITAIKIEGVEHEFATIPGVLEDVTNIILNLKQVRFKQIVPNADVEKATIVISNSEVFRAGDLNAQLSNFEVLNSNLVICHLDKSATLTMEFSINKGRGYVSAEENRAEHNELSTIAIDSIYTPIRNVKYAVENFRVEQKTDYEKLLMEVTTDGSIRPVDALREAAQILISHFSLFAENKIAIEYVDIVDTDEFDEDSLHMRQLLKSKLSGLDLSVRALNCLNAAGVDTLGDLVSLSRSDLMKIRNFGKKSLTELDELLATLNLSFGMDISKYKLDKD.

The segment at 1-232 is alpha N-terminal domain (alpha-NTD); that stretch reads MAILAFQKPE…SHFSLFAENK (232 aa). The segment at 248 to 330 is alpha C-terminal domain (alpha-CTD); that stretch reads EDSLHMRQLL…DISKYKLDKD (83 aa).

This sequence belongs to the RNA polymerase alpha chain family. In terms of assembly, homodimer. The RNAP catalytic core consists of 2 alpha, 1 beta, 1 beta' and 1 omega subunit. When a sigma factor is associated with the core the holoenzyme is formed, which can initiate transcription.

The catalysed reaction is RNA(n) + a ribonucleoside 5'-triphosphate = RNA(n+1) + diphosphate. In terms of biological role, DNA-dependent RNA polymerase catalyzes the transcription of DNA into RNA using the four ribonucleoside triphosphates as substrates. The protein is DNA-directed RNA polymerase subunit alpha of Porphyromonas gingivalis (strain ATCC BAA-308 / W83).